A 557-amino-acid polypeptide reads, in one-letter code: Membrane protein insertase YidC (557 aa).

Transmembrane regions (helical) follow at residues 6-26, 219-239, 367-387, 437-457, and 514-534; these read TILWAVFSLSGLMLYNNWQVH, IGPFGGAFSASTFTGPAIYTD, IVGNWGWSIILLTVLIKLAFF, LGGCLPVVIQIPVFISLYWVL, and MPIVFSIMFFFFPAGLVLYWV.

Belongs to the OXA1/ALB3/YidC family. Type 1 subfamily. Interacts with the Sec translocase complex via SecD. Specifically interacts with transmembrane segments of nascent integral membrane proteins during membrane integration.

It localises to the cell inner membrane. Its function is as follows. Required for the insertion and/or proper folding and/or complex formation of integral membrane proteins into the membrane. Involved in integration of membrane proteins that insert both dependently and independently of the Sec translocase complex, as well as at least some lipoproteins. Aids folding of multispanning membrane proteins. The chain is Membrane protein insertase YidC from Polynucleobacter asymbioticus (strain DSM 18221 / CIP 109841 / QLW-P1DMWA-1) (Polynucleobacter necessarius subsp. asymbioticus).